A 187-amino-acid chain; its full sequence is uncharacterized protein (187 aa).

Residues 131-187 (VAEKKDQRKKKPKVKTQGENAPVAKSAGENSGKLEEQKDERKGIAKDIDDFFGGIDG) form a disordered region. Residues 162–179 (GKLEEQKDERKGIAKDID) show a composition bias toward basic and acidic residues.

This is an uncharacterized protein from Haemophilus influenzae (Bacteriophage HP1).